We begin with the raw amino-acid sequence, 177 residues long: Translation initiation factor IF-3 (177 aa).

This sequence belongs to the IF-3 family. Monomer.

It is found in the cytoplasm. Its function is as follows. IF-3 binds to the 30S ribosomal subunit and shifts the equilibrium between 70S ribosomes and their 50S and 30S subunits in favor of the free subunits, thus enhancing the availability of 30S subunits on which protein synthesis initiation begins. In Nostoc punctiforme (strain ATCC 29133 / PCC 73102), this protein is Translation initiation factor IF-3.